A 142-amino-acid polypeptide reads, in one-letter code: Large ribosomal subunit protein uL11 (142 aa).

This sequence belongs to the universal ribosomal protein uL11 family. As to quaternary structure, part of the ribosomal stalk of the 50S ribosomal subunit. Interacts with L10 and the large rRNA to form the base of the stalk. L10 forms an elongated spine to which L12 dimers bind in a sequential fashion forming a multimeric L10(L12)X complex. One or more lysine residues are methylated.

Forms part of the ribosomal stalk which helps the ribosome interact with GTP-bound translation factors. The protein is Large ribosomal subunit protein uL11 of Colwellia psychrerythraea (strain 34H / ATCC BAA-681) (Vibrio psychroerythus).